A 387-amino-acid chain; its full sequence is MISFGNVSALQAAMPQARNEILNEGKLSIGGKEYTINAATQEFTRANPTSGAVARFFEATGKLFREGSTQSVAKAITKAVFDNEQGQAQRLQTSSSVEHGQMLFKDANLKTPSDVLNAFAKLDSKMVKSHAAELSQLAERAMTEVMLETDSGKNLKALIGDDAVKSLAVRVVKDYGGGVAAAQKNPEVRINQMQAVFDMEVMHLKAAQRHIEGLASTDLNQGVYAEGLPEDAFNKAGVTNNVERAAAWIINASNSKGNDAENITSLLKEYATNGKDLLNMDNLKELHARLVPNVERDYRGPNISGGTLPSSIGGEGMLKQHIEGFLKENPVADKDLGKHLFAGVIGYHGFTDGNGRMGRMLYAIAELRNDSFNPLAMNAENSLHGIK.

Residues 76–77, 122–124, 353–355, and Arg-359 each bind ATP; these read IT, LDS, and GNG. A Fido domain is found at 278 to 387; sequence LNMDNLKELH…NAENSLHGIK (110 aa).

Its subcellular location is the secreted. The catalysed reaction is L-tyrosyl-[protein] + ATP = O-(5'-adenylyl)-L-tyrosyl-[protein] + diphosphate. It carries out the reaction L-threonyl-[protein] + ATP = 3-O-(5'-adenylyl)-L-threonyl-[protein] + diphosphate. In terms of biological role, adenylyltransferase involved in virulence by mediating the addition of adenosine 5'-monophosphate (AMP) to specific threonine residue of host Rho GTPases RhoA, Rac and Cdc42. The resulting AMPylation prevents the interaction of Rho GTPases with downstream effectors, thereby inhibiting actin assembly in infected cells. The chain is Protein adenylyltransferase VopS (vopS) from Vibrio parahaemolyticus serotype O3:K6 (strain RIMD 2210633).